The following is a 66-amino-acid chain: KEGYIVNYHDGCKYECYKLGDNDYCLRECRARYGKGAGGYCYAFGCWCTHLYEQAVVWPLPKKTCN.

Residues K1–N66 enclose the LCN-type CS-alpha/beta domain. 4 disulfide bridges follow: C12-C65, C16-C41, C25-C46, and C29-C48. Asparagine amide is present on N66.

The protein belongs to the long (4 C-C) scorpion toxin superfamily. Sodium channel inhibitor family. Beta subfamily. In terms of tissue distribution, expressed by the venom gland.

It is found in the secreted. Its function is as follows. Beta toxins bind voltage-independently at site-4 of sodium channels and shift the voltage of activation toward more negative potentials thereby affecting sodium channel activation and promoting spontaneous and repetitive firing. A mixture of Cbo2 and Cbo3 is weakly active on the human voltage-gated sodium channels Nav1.4/SCN4A and Nav1.6/SCN8A when tested at 200 nM. In vivo, is toxic to mice when intraperitoneally injected. In Centruroides bonito (Scorpion), this protein is Beta-toxin Cbo2.